The primary structure comprises 496 residues: MQISLSSAQPQAWSGTVLALGIAEGDPNGWIPAMEERFSISLGDWLEQRKFQGKNGESASLQLLNPNCESLVLIGLGPLEALDVNSFRQAGAAAARASKNQTGSIGLLLPWNAVDPAEAVTVAAQAVRLALYSDQRFRSKPEPSIHPERLELLGPLPNTLSSALEAVHPICAGVELARELVAAPPNSVTPSALAESAAQMAHEHGLDLKVLERSDCEARGMGSFLSVCQGSDMDPKFIHLTYRPSGPATKRVVLVGKGLTFDSGGYNLKVGAAQIDMMKFDMGGSAAVLGAMRSIAELRPQGVEVHMLVASCENMINGSAVHPGDIVTASNGTTIEINNTDAEGRLTLADALVYASELEPDAIVDLATLTGACVIALGDEIAGLWTGDDSLANSLEGAAKDAGEGLWRMPMHQAYRKGLKSLLADLKNTGPRPGGSITAALFLKEFVRSSIPWAHIDIAGTVWSDKGRGMDPAGATGYGVRTLVSWVCAQTQQAEN.

Positions 257 and 262 each coordinate Mn(2+). Lys269 is a catalytic residue. Residues Asp281, Asp341, and Glu343 each coordinate Mn(2+). The active site involves Arg345.

The protein belongs to the peptidase M17 family. Mn(2+) is required as a cofactor.

The protein localises to the cytoplasm. It catalyses the reaction Release of an N-terminal amino acid, Xaa-|-Yaa-, in which Xaa is preferably Leu, but may be other amino acids including Pro although not Arg or Lys, and Yaa may be Pro. Amino acid amides and methyl esters are also readily hydrolyzed, but rates on arylamides are exceedingly low.. The enzyme catalyses Release of an N-terminal amino acid, preferentially leucine, but not glutamic or aspartic acids.. In terms of biological role, presumably involved in the processing and regular turnover of intracellular proteins. Catalyzes the removal of unsubstituted N-terminal amino acids from various peptides. The protein is Probable cytosol aminopeptidase of Synechococcus sp. (strain CC9311).